The chain runs to 470 residues: Methylenetetrahydrofolate--tRNA-(uracil-5-)-methyltransferase TrmFO (470 aa).

10–15 (GAGLAG) is an FAD binding site.

The protein belongs to the MnmG family. TrmFO subfamily. The cofactor is FAD.

The protein resides in the cytoplasm. It catalyses the reaction uridine(54) in tRNA + (6R)-5,10-methylene-5,6,7,8-tetrahydrofolate + NADH + H(+) = 5-methyluridine(54) in tRNA + (6S)-5,6,7,8-tetrahydrofolate + NAD(+). The catalysed reaction is uridine(54) in tRNA + (6R)-5,10-methylene-5,6,7,8-tetrahydrofolate + NADPH + H(+) = 5-methyluridine(54) in tRNA + (6S)-5,6,7,8-tetrahydrofolate + NADP(+). Its function is as follows. Catalyzes the folate-dependent formation of 5-methyl-uridine at position 54 (M-5-U54) in all tRNAs. In Prochlorococcus marinus subsp. pastoris (strain CCMP1986 / NIES-2087 / MED4), this protein is Methylenetetrahydrofolate--tRNA-(uracil-5-)-methyltransferase TrmFO.